The sequence spans 199 residues: Superoxide dismutase [Mn/Fe] (199 aa).

Fe(3+)-binding residues include His27, His81, Asp161, and His165. The Mn(2+) site is built by His27, His81, Asp161, and His165.

This sequence belongs to the iron/manganese superoxide dismutase family. Homodimer. Requires Mn(2+) as cofactor. The cofactor is Fe(3+).

The catalysed reaction is 2 superoxide + 2 H(+) = H2O2 + O2. Its function is as follows. Destroys superoxide anion radicals which are normally produced within the cells and which are toxic to biological systems. Catalyzes the dismutation of superoxide anion radicals into O2 and H2O2 by successive reduction and oxidation of the transition metal ion at the active site. This is Superoxide dismutase [Mn/Fe] (sodA) from Staphylococcus haemolyticus (strain JCSC1435).